We begin with the raw amino-acid sequence, 1906 residues long: Serine protease/ABC transporter B family protein tagB (1906 aa).

The signal sequence occupies residues 1–31; that stretch reads MKFQFSSPSKIFLFSSVILILIFIGIKFELL. Residues 96-134 form a disordered region; sequence INNNNNNNNKLNNNNNNNNNNNNNNNNNNNNNNNNNNNN. The Peptidase S8 domain maps to 356–763; the sequence is PTVIFGTKDK…ASSTNPSNAI (408 aa). Residues Asp-387 and His-432 each act as charge relay system in the active site. N-linked (GlcNAc...) asparagine glycans are attached at residues Asn-594, Asn-621, and Asn-672. The active-site Charge relay system is Ser-695. N-linked (GlcNAc...) asparagine glycans are attached at residues Asn-747 and Asn-823. 3 consecutive transmembrane segments (helical) span residues 1011 to 1031, 1076 to 1096, and 1121 to 1141; these read YIIIIVAGGTMVLIILLLMWI, FIIELTIATACSLVATAASIL, and FIIIFILAFIEFLFTNVGSWI. The ABC transmembrane type-1 domain occupies 1080–1363; sequence LTIATACSLV…LFGVYVSYIQ (284 aa). N-linked (GlcNAc...) asparagine glycosylation occurs at Asn-1172. A run of 3 helical transmembrane segments spans residues 1210–1230, 1309–1329, and 1332–1352; these read LVFIFTISWKLSLAFFAAVPI, WLLIESLTFVILYFSAYLVIQ, and FTVGLMISFSLYIGYVVDASS. The interval 1385 to 1455 is disordered; that stretch reads LEEEEADRLA…NNNNNIGNLD (71 aa). Residues 1396-1405 are compositionally biased toward gly residues; that stretch reads LSGGGGGGGD. Residues 1407-1420 show a composition bias toward basic and acidic residues; sequence GDDKKDKQNIENGK. The region spanning 1518–1756 is the ABC transporter domain; it reads IEFKNVSFRY…KGKYYRMFSE (239 aa). Asn-1522 carries N-linked (GlcNAc...) asparagine glycosylation. 1553–1560 is an ATP binding site; that stretch reads GPSGSGKS. N-linked (GlcNAc...) asparagine glycosylation is present at Asn-1658. The segment at 1757-1906 is disordered; sequence DKDDTPLQNN…QMDEENDEER (150 aa). Composition is skewed to low complexity over residues 1765–1779 and 1814–1871; these read NNNNNKNNNNNNNNN and EQQE…DYDQ. Over residues 1872–1886 the composition is skewed to pro residues; that stretch reads VPPPPPLPSESPSPP.

The protein in the C-terminal section; belongs to the ABC transporter superfamily. ABCB family. Multidrug resistance exporter (TC 3.A.1.201) subfamily. It in the N-terminal section; belongs to the peptidase S8 family.

It is found in the membrane. Its function is as follows. Intercellular communication via tagB may mediate integration of cellular differentiation with morphogenesis. The chain is Serine protease/ABC transporter B family protein tagB (tagB) from Dictyostelium discoideum (Social amoeba).